Reading from the N-terminus, the 116-residue chain is Protein RALF-like 33 (116 aa).

The N-terminal stretch at M1–A23 is a signal peptide. Positions A24–L67 are cleaved as a propeptide — removed in mature form. Residue N41 is glycosylated (N-linked (GlcNAc...) asparagine). 2 disulfide bridges follow: C85/C95 and C108/C114.

The protein belongs to the plant rapid alkalinization factor (RALF) family. Proteolytically cleaved, probably by S1P, a subtilisin-like serine protease (subtilase). In terms of tissue distribution, expressed in roots, stems, leaves and plants.

It is found in the secreted. In terms of biological role, cell signaling peptide that may regulate plant stress, growth, and development. Mediates a rapid alkalinization of extracellular space by mediating a transient increase in the cytoplasmic Ca(2+) concentration leading to a calcium-dependent signaling events through a cell surface receptor and a concomitant activation of some intracellular mitogen-activated protein kinases. The polypeptide is Protein RALF-like 33 (RALFL33) (Arabidopsis thaliana (Mouse-ear cress)).